Consider the following 537-residue polypeptide: 2-succinyl-5-enolpyruvyl-6-hydroxy-3-cyclohexene-1-carboxylate synthase (537 aa).

The protein belongs to the TPP enzyme family. MenD subfamily. As to quaternary structure, homodimer. Mg(2+) is required as a cofactor. It depends on Mn(2+) as a cofactor. The cofactor is thiamine diphosphate.

It catalyses the reaction isochorismate + 2-oxoglutarate + H(+) = 5-enolpyruvoyl-6-hydroxy-2-succinyl-cyclohex-3-ene-1-carboxylate + CO2. Its pathway is quinol/quinone metabolism; 1,4-dihydroxy-2-naphthoate biosynthesis; 1,4-dihydroxy-2-naphthoate from chorismate: step 2/7. It participates in quinol/quinone metabolism; menaquinone biosynthesis. Its function is as follows. Catalyzes the thiamine diphosphate-dependent decarboxylation of 2-oxoglutarate and the subsequent addition of the resulting succinic semialdehyde-thiamine pyrophosphate anion to isochorismate to yield 2-succinyl-5-enolpyruvyl-6-hydroxy-3-cyclohexene-1-carboxylate (SEPHCHC). The polypeptide is 2-succinyl-5-enolpyruvyl-6-hydroxy-3-cyclohexene-1-carboxylate synthase (Rhodococcus erythropolis (strain PR4 / NBRC 100887)).